We begin with the raw amino-acid sequence, 140 residues long: Putative pre-16S rRNA nuclease (140 aa).

This sequence belongs to the YqgF nuclease family.

The protein resides in the cytoplasm. Could be a nuclease involved in processing of the 5'-end of pre-16S rRNA. This Edwardsiella ictaluri (strain 93-146) protein is Putative pre-16S rRNA nuclease.